A 230-amino-acid polypeptide reads, in one-letter code: V-type proton ATPase subunit E (230 aa).

The protein belongs to the V-ATPase E subunit family. V-ATPase is a heteromultimeric enzyme composed of a peripheral catalytic V1 complex (components A to H) attached to an integral membrane V0 proton pore complex (components: a, c, c', c'' and d).

In terms of biological role, subunit of the peripheral V1 complex of vacuolar ATPase essential for assembly or catalytic function. V-ATPase is responsible for acidifying a variety of intracellular compartments in eukaryotic cells. The chain is V-type proton ATPase subunit E (VATE) from Citrus limon (Lemon).